The chain runs to 600 residues: Transcription factor efl-3 (600 aa).

A disordered region spans residues 35–65; it reads LPEPRVNRTTDPDHENLLPSPVPRPSPAMSQ. Residues 39–50 are compositionally biased toward basic and acidic residues; sequence RVNRTTDPDHEN. 2 consecutive DNA-binding regions follow at residues 95-164 and 253-343; these read RKEK…QWQG and RDRQ…VYCG.

Belongs to the E2F/DP family.

The protein localises to the nucleus. Functionally, probable transcription factor which represses gene expression in a subset of ventral nerve cord neurons. Involved in regulating programmed cell death and determining cell fate during development, acting in a partially redundant manner with lin-39 to repress the BH3 domain-encoding gene egl-1 in the VA and VB motor neurons. The chain is Transcription factor efl-3 from Caenorhabditis elegans.